A 368-amino-acid chain; its full sequence is P2X receptor C (368 aa).

Residues 1 to 24 (MLDWDSILAYNTIKVVRIRDRRLG) lie on the Cytoplasmic side of the membrane. The chain crosses the membrane as a helical span at residues 25 to 45 (ILHLIFMIAIISYVVIYSAII). Residues 46–368 (KKGYLSIEEP…DKLYHNIEAL (323 aa)) lie on the Lumenal side of the membrane. The segment at 282 to 295 (RHAIRLIFIQTGVI) is pore-forming motif.

Belongs to the P2X receptor family.

It is found in the contractile vacuole membrane. Its function is as follows. P2X receptors are ligand-gated ion channels that play a role in intracellular calcium signaling. ATP does not evoke inward currents in p2xC. Not essential for osmoregulation. The sequence is that of P2X receptor C (p2xC) from Dictyostelium discoideum (Social amoeba).